The chain runs to 140 residues: Putative ABC transporter permease protein ORF1 (140 aa).

An ABC transmembrane type-1 domain is found at 1 to 133; it reads DPNVAFYSVV…ITTAGIFAYF (133 aa). 3 helical membrane-spanning segments follow: residues 9-29, 65-85, and 115-135; these read VVAVICWQYIPFYMIFFIAAL, TACILSLIGSLKYFDLIYVMT, and TIASAMFLIITTAGIFAYFVT.

The protein belongs to the binding-protein-dependent transport system permease family. MalFG subfamily.

Its subcellular location is the cell membrane. Functionally, may play a role in sugar transport. This is Putative ABC transporter permease protein ORF1 from Caldicellulosiruptor sp. (strain Rt8B.4).